Here is a 547-residue protein sequence, read N- to C-terminus: Probable bifunctional tRNA threonylcarbamoyladenosine biosynthesis protein (547 aa).

Positions 1–329 (MDTSKDLICI…YRSDMVEVNW (329 aa)) are kae1. Residues histidine 112, histidine 116, and tyrosine 133 each coordinate Fe cation. Residues 133–137 (YVSGG), aspartate 165, glycine 178, glutamate 182, and asparagine 262 each bind L-threonylcarbamoyladenylate. Aspartate 290 lines the Fe cation pocket. The Protein kinase domain maps to 346–547 (IIPEHLIGKG…KEVEKRARYL (202 aa)). ATP contacts are provided by residues 352–360 (IGKGAEADI) and lysine 373. The active-site Proton acceptor; for kinase activity is the aspartate 465.

This sequence in the N-terminal section; belongs to the KAE1 / TsaD family. In the C-terminal section; belongs to the protein kinase superfamily. Tyr protein kinase family. BUD32 subfamily. Component of the KEOPS complex that consists of Kae1, Bud32, Cgi121 and Pcc1; the whole complex dimerizes. The cofactor is Fe(2+).

It is found in the cytoplasm. The enzyme catalyses L-seryl-[protein] + ATP = O-phospho-L-seryl-[protein] + ADP + H(+). It carries out the reaction L-threonyl-[protein] + ATP = O-phospho-L-threonyl-[protein] + ADP + H(+). It catalyses the reaction L-threonylcarbamoyladenylate + adenosine(37) in tRNA = N(6)-L-threonylcarbamoyladenosine(37) in tRNA + AMP + H(+). Its function is as follows. Required for the formation of a threonylcarbamoyl group on adenosine at position 37 (t(6)A37) in tRNAs that read codons beginning with adenine. Is a component of the KEOPS complex that is probably involved in the transfer of the threonylcarbamoyl moiety of threonylcarbamoyl-AMP (TC-AMP) to the N6 group of A37. The Kae1 domain likely plays a direct catalytic role in this reaction. The Bud32 domain probably displays kinase activity that regulates Kae1 function. This Methanococcus maripaludis (strain C7 / ATCC BAA-1331) protein is Probable bifunctional tRNA threonylcarbamoyladenosine biosynthesis protein.